The chain runs to 295 residues: Ribosomal RNA small subunit methyltransferase A (295 aa).

Asn29, Leu31, Gly56, Glu77, Asp102, and Asn128 together coordinate S-adenosyl-L-methionine.

The protein belongs to the class I-like SAM-binding methyltransferase superfamily. rRNA adenine N(6)-methyltransferase family. RsmA subfamily.

It localises to the cytoplasm. It catalyses the reaction adenosine(1518)/adenosine(1519) in 16S rRNA + 4 S-adenosyl-L-methionine = N(6)-dimethyladenosine(1518)/N(6)-dimethyladenosine(1519) in 16S rRNA + 4 S-adenosyl-L-homocysteine + 4 H(+). Specifically dimethylates two adjacent adenosines (A1518 and A1519) in the loop of a conserved hairpin near the 3'-end of 16S rRNA in the 30S particle. May play a critical role in biogenesis of 30S subunits. This Listeria welshimeri serovar 6b (strain ATCC 35897 / DSM 20650 / CCUG 15529 / CIP 8149 / NCTC 11857 / SLCC 5334 / V8) protein is Ribosomal RNA small subunit methyltransferase A.